The primary structure comprises 377 residues: Bacterial actin-related protein (377 aa).

The protein belongs to the actin family.

Its function is as follows. May be a dominant-negative inhibitor of eukaryotic actin polymerization. The polypeptide is Bacterial actin-related protein (barP) (Haliangium ochraceum (strain DSM 14365 / JCM 11303 / SMP-2)).